Here is a 203-residue protein sequence, read N- to C-terminus: Glycerol-3-phosphate acyltransferase (203 aa).

Topologically, residues 1 to 3 are periplasmic; the sequence is MSA. A helical membrane pass occupies residues 4 to 24; it reads IAPGMILFAYLCGSISSAILV. The Cytoplasmic segment spans residues 25-52; that stretch reads CRIAGLPDPRESGSGNPGATNVLRIGGK. The helical transmembrane segment at 53–73 threads the bilayer; the sequence is GAAVAVLIFDILKGMLPVWGA. Over 74–80 the chain is Periplasmic; it reads YALGVTP. Residues 81-101 form a helical membrane-spanning segment; it reads FWLGLIAIAACLGHIWPVFFG. Topologically, residues 102–111 are cytoplasmic; it reads FKGGKGVATA. The chain crosses the membrane as a helical span at residues 112 to 132; sequence FGAIAPIGWDLTGVMAGTWLL. Residues 133–137 are Periplasmic-facing; that stretch reads TVLLS. The chain crosses the membrane as a helical span at residues 138–158; it reads GYSSLGAIVSALIAPFYVWWF. The Cytoplasmic segment spans residues 159-203; the sequence is KPQFTFPVSMLSCLILLRHHDNIQRLWRRQETKIWTKLKKKRQKD.

It belongs to the PlsY family. In terms of assembly, probably interacts with PlsX.

It is found in the cell inner membrane. It carries out the reaction sn-glycerol 3-phosphate + an acyl-CoA = a 1-acyl-sn-glycero-3-phosphate + CoA. The catalysed reaction is a fatty acyl-[ACP] + sn-glycerol 3-phosphate = a 1-acyl-sn-glycero-3-phosphate + holo-[ACP]. The protein operates within lipid metabolism; phospholipid metabolism. In terms of biological role, catalyzes the transfer of an acyl group from acyl-ACP to glycerol-3-phosphate (G3P) to form lysophosphatidic acid (LPA). This enzyme can also utilize acyl-CoA as fatty acyl donor, but not acyl-PO(4). This chain is Glycerol-3-phosphate acyltransferase, found in Salmonella agona (strain SL483).